The chain runs to 199 residues: NAD(P)H dehydrogenase (quinone) (199 aa).

A Flavodoxin-like domain is found at 4–190 (MLVLYYSAYG…DGARFQGRRV (187 aa)). Residues 10–15 (SAYGHM) and 78–80 (TRY) each bind FMN. Position 12 (tyrosine 12) interacts with NAD(+). Tryptophan 98 is a binding site for substrate. Residues 113–119 (STATQYG) and histidine 134 contribute to the FMN site. The tract at residues 161–181 (YGMTTTADGDGSRQPSAQELD) is disordered. The segment covering 163 to 177 (MTTTADGDGSRQPSA) has biased composition (polar residues).

This sequence belongs to the WrbA family. FMN is required as a cofactor.

It catalyses the reaction a quinone + NADH + H(+) = a quinol + NAD(+). The enzyme catalyses a quinone + NADPH + H(+) = a quinol + NADP(+). The polypeptide is NAD(P)H dehydrogenase (quinone) (Brucella canis (strain ATCC 23365 / NCTC 10854 / RM-666)).